We begin with the raw amino-acid sequence, 217 residues long: ATP phosphoribosyltransferase (217 aa).

It belongs to the ATP phosphoribosyltransferase family. Short subfamily. Heteromultimer composed of HisG and HisZ subunits.

It is found in the cytoplasm. It catalyses the reaction 1-(5-phospho-beta-D-ribosyl)-ATP + diphosphate = 5-phospho-alpha-D-ribose 1-diphosphate + ATP. The protein operates within amino-acid biosynthesis; L-histidine biosynthesis; L-histidine from 5-phospho-alpha-D-ribose 1-diphosphate: step 1/9. Catalyzes the condensation of ATP and 5-phosphoribose 1-diphosphate to form N'-(5'-phosphoribosyl)-ATP (PR-ATP). Has a crucial role in the pathway because the rate of histidine biosynthesis seems to be controlled primarily by regulation of HisG enzymatic activity. In Synechococcus sp. (strain WH7803), this protein is ATP phosphoribosyltransferase.